A 415-amino-acid chain; its full sequence is Vascular endothelial growth factor C (415 aa).

The N-terminal stretch at 1-31 (MHLLCFLSLACSLLAAALIPGPREAPATVAA) is a signal peptide. Positions 32–107 (FESGLGFSEA…RTGDTVKLAA (76 aa)) are excised as a propeptide. Cystine bridges form between Cys127-Cys169, Cys158-Cys205, and Cys162-Cys207. Asn171, Asn201, and Asn236 each carry an N-linked (GlcNAc...) asparagine glycan. The propeptide occupies 224–415 (SLPATLPQCQ…PSYWKRPHLN (192 aa)). 4 consecutive repeat copies span residues 276 to 291 (CGPNKELDEDTCQCVC), 300 to 315 (CGPHKELDRDSCQCVC), 324 to 339 (CGANREFDENTCQCVC), and 343 to 358 (CPRNQPLNPGKCACEC). The segment at 276-358 (CGPNKELDED…LNPGKCACEC (83 aa)) is 4 X 16 AA repeats of C-X(10)-C-X-C-X(1,3)-C.

This sequence belongs to the PDGF/VEGF growth factor family. As to quaternary structure, homodimer; non-covalent and antiparallel. Interacts with FLT4/VEGFR3; the interaction is required for FLT4/VEGFR3 homodimarization and activation. Post-translationally, undergoes a complex proteolytic maturation which generates a variety of processed secreted forms with increased activity toward VEGFR-3, but only the fully processed form could activate VEGFR-2. VEGF-C first form an antiparallel homodimer linked by disulfide bonds. Before secretion, a cleavage occurs between Arg-223 and Ser-224 producing a heterotetramer. The next extracellular step of the processing removes the N-terminal propeptide. Finally the mature VEGF-C is composed mostly of two VEGF homology domains (VHDs) bound by non-covalent interactions. In terms of tissue distribution, highly expressed in the lung, ovary, preputial gland and the adrenal gland. Expressed in the post-pubertal mammary glands.

The protein localises to the secreted. Its function is as follows. Growth factor active in angiogenesis, and endothelial cell growth, stimulating their proliferation and migration and also has effects on the permeability of blood vessels. May function in angiogenesis of the venous and lymphatic vascular systems during embryogenesis, and also in the maintenance of differentiated lymphatic endothelium in adults. Binds and activates KDR/VEGFR2 and FLT4/VEGFR3 receptors. In Rattus norvegicus (Rat), this protein is Vascular endothelial growth factor C (Vegfc).